Here is a 357-residue protein sequence, read N- to C-terminus: tRNA pseudouridine synthase Pus10 (357 aa).

The THUMP domain occupies 1-118 (MNLCRECYGI…TFTFELQIRP (118 aa)). The active-site Nucleophile is the aspartate 187. Positions 251 and 322 each coordinate substrate.

Belongs to the pseudouridine synthase Pus10 family.

It catalyses the reaction uridine(54) in tRNA = pseudouridine(54) in tRNA. The catalysed reaction is uridine(55) in tRNA = pseudouridine(55) in tRNA. In terms of biological role, responsible for synthesis of pseudouridine from uracil-54 and uracil-55 in the psi GC loop of transfer RNAs. The chain is tRNA pseudouridine synthase Pus10 from Archaeoglobus fulgidus (strain ATCC 49558 / DSM 4304 / JCM 9628 / NBRC 100126 / VC-16).